The primary structure comprises 324 residues: Ferrochelatase (324 aa).

Positions 197 and 278 each coordinate Fe cation.

It belongs to the ferrochelatase family.

Its subcellular location is the cytoplasm. The enzyme catalyses heme b + 2 H(+) = protoporphyrin IX + Fe(2+). Its pathway is porphyrin-containing compound metabolism; protoheme biosynthesis; protoheme from protoporphyrin-IX: step 1/1. In terms of biological role, catalyzes the ferrous insertion into protoporphyrin IX. The protein is Ferrochelatase of Aeromonas hydrophila subsp. hydrophila (strain ATCC 7966 / DSM 30187 / BCRC 13018 / CCUG 14551 / JCM 1027 / KCTC 2358 / NCIMB 9240 / NCTC 8049).